A 1121-amino-acid chain; its full sequence is Cuscuta receptor 1 (1121 aa).

The signal sequence occupies residues 1 to 20; sequence MGNIKFLLLVFFLIVVVVNG. Residues 21 to 1058 are Extracellular-facing; that stretch reads CWEEERNALL…EESSELEDIQ (1038 aa). N-linked (GlcNAc...) asparagine glycosylation is present at asparagine 91. LRR repeat units lie at residues 98–122, 126–152, 185–209, 210–233, 234–259, 260–282, 284–308, and 309–331; these read FKSLQVLLLSSQNIIGWTKNEGFSK, LPNLKEVDLQYNPIDPKVLLSSLCWIS, LSNLRELWFEGYEINDINILSALGE, LRNLEKLILDDNNFNSTIFSSLKI, FPSLKHLNLAANEINGNVEMNDIIDL, SNLEYLDLSDNNIHSFATTKGNK, MTSLRSLLLGSSYSNSSRVIRSLKS, and FSSLKSLSYKNSNLTSPSIIYAL. N-linked (GlcNAc...) asparagine glycosylation is present at asparagine 224. 3 N-linked (GlcNAc...) asparagine glycosylation sites follow: asparagine 298, asparagine 321, and asparagine 333. One copy of the LRR 9 repeat lies at 334 to 360; it reads LSTVEYLYFKGSSLNDNFLPNIGQMTS. N-linked (GlcNAc...) asparagine glycans are attached at residues asparagine 372 and asparagine 406. LRR repeat units lie at residues 383–406, 407–432, 433–457, 459–479, 507–531, 556–580, 581–605, 607–628, 630–654, 655–678, 680–701, 702–725, 726–749, 751–772, 773–796, 797–820, 822–846, 914–938, 939–961, 962–986, and 988–1012; these read LKYIEELDFLNNNFVGTLPLCLGN, LTSLRWLSLAGNNLHGNIASHSIWRR, LTSLEYLDIADNQFDVPLSFSQFSD, KKLIYLNVGYNTIITDTEYQN, QYDLRILAIEGNQLQGKFPTWLLEN, HLHLEAVDVSNNKLNGHIPQNMSLA, FPKLLSLNMSHNHLEGPIPSKISGI, LTILDLSVNFLSGEVPGDLAVV, SPQLFYLRLSNNKLKGKIFSEEFRP, HVLSFLYLNDNNFEGALPSNVFLS, LITLDASRNNFSGEIPGCTRDN, RRLLQLDLSKNHLQGLIPVEICNL, KIINVLAISENKISGSIPSCVSSL, LKHIHLQKNQLGGELGHVIFNF, SSLITLDLRYNNFAGNIPYTIGSL, SNLNYLLLSNNKLEGDIPTQICML, NLSIVDLSFNKLYGPLPPCLGYLTQ, LKYMSGIDLSSNRLTGEIPVELGNM, SNIHALNLSHNHLNGRIPNTFSN, LQEIESLDLSCNRLNGSIPVGLLEL, and SLAVFSVAYNNLSGAVPDFKAQFGT. Asparagine 531, asparagine 576, and asparagine 588 each carry an N-linked (GlcNAc...) asparagine glycan. An N-linked (GlcNAc...) asparagine glycan is attached at asparagine 689. Residue asparagine 771 is glycosylated (N-linked (GlcNAc...) asparagine). N-linked (GlcNAc...) asparagine glycosylation is found at asparagine 822, asparagine 937, asparagine 945, asparagine 976, asparagine 998, asparagine 1014, and asparagine 1041. A helical membrane pass occupies residues 1059 to 1079; sequence CFYIGFVVSFGAILLGLAAAL. At 1080–1121 the chain is on the cytoplasmic side; that stretch reads CLNRHWRRAWFRMIEALMFYCYYFVLDNIVTPIKSRWYKNVG.

Belongs to the RLP family. In terms of assembly, interacts with an 11 kDa glycine-rich protein (GRP) of C.reflexa. Interacts with SOBIR1 and SOBIR1-like kinases; presence or absence of GRP has no effect on interaction.

It is found in the cell membrane. The protein localises to the cell surface. Involved in plant defense. Contributes to resistance against parasitic plant C.reflexa. Acts as a receptor for the 11 kDa glycine-rich protein (GRP) of C.reflexa inducing immune responses such as emission of stress-related phytohormone ethylene, reactive oxygen species (ROS) release, and hypersensitive cell death. Recognizes a specific pathogen-associated molecular pattern (PAMP), a cysteine-rich peptide 21 (crip21), from GRP located on the cell wall of C.reflexa. In Solanum lycopersicum (Tomato), this protein is Cuscuta receptor 1.